The primary structure comprises 486 residues: ATP synthase subunit beta 2 (486 aa).

166-173 (GGAGVGKT) serves as a coordination point for ATP.

Belongs to the ATPase alpha/beta chains family. As to quaternary structure, F-type ATPases have 2 components, CF(1) - the catalytic core - and CF(0) - the membrane proton channel. CF(1) has five subunits: alpha(3), beta(3), gamma(1), delta(1), epsilon(1). CF(0) has three main subunits: a(1), b(2) and c(9-12). The alpha and beta chains form an alternating ring which encloses part of the gamma chain. CF(1) is attached to CF(0) by a central stalk formed by the gamma and epsilon chains, while a peripheral stalk is formed by the delta and b chains.

It localises to the cell inner membrane. The enzyme catalyses ATP + H2O + 4 H(+)(in) = ADP + phosphate + 5 H(+)(out). In terms of biological role, produces ATP from ADP in the presence of a proton gradient across the membrane. The catalytic sites are hosted primarily by the beta subunits. The protein is ATP synthase subunit beta 2 of Gluconobacter oxydans (strain 621H) (Gluconobacter suboxydans).